Reading from the N-terminus, the 361-residue chain is Phosphoserine aminotransferase (361 aa).

R42 is an L-glutamate binding site. Pyridoxal 5'-phosphate-binding positions include 76–77, W102, T153, D173, and Q196; that span reads AR. The residue at position 197 (K197) is an N6-(pyridoxal phosphate)lysine. 238–239 contacts pyridoxal 5'-phosphate; the sequence is NT.

The protein belongs to the class-V pyridoxal-phosphate-dependent aminotransferase family. SerC subfamily. Homodimer. It depends on pyridoxal 5'-phosphate as a cofactor.

It is found in the cytoplasm. The enzyme catalyses O-phospho-L-serine + 2-oxoglutarate = 3-phosphooxypyruvate + L-glutamate. It catalyses the reaction 4-(phosphooxy)-L-threonine + 2-oxoglutarate = (R)-3-hydroxy-2-oxo-4-phosphooxybutanoate + L-glutamate. It participates in amino-acid biosynthesis; L-serine biosynthesis; L-serine from 3-phospho-D-glycerate: step 2/3. Its pathway is cofactor biosynthesis; pyridoxine 5'-phosphate biosynthesis; pyridoxine 5'-phosphate from D-erythrose 4-phosphate: step 3/5. In terms of biological role, catalyzes the reversible conversion of 3-phosphohydroxypyruvate to phosphoserine and of 3-hydroxy-2-oxo-4-phosphonooxybutanoate to phosphohydroxythreonine. This is Phosphoserine aminotransferase from Buchnera aphidicola subsp. Schizaphis graminum (strain Sg).